We begin with the raw amino-acid sequence, 564 residues long: Dihydroxy-acid dehydratase (564 aa).

Asp-80 lines the Mg(2+) pocket. Cys-121 is a binding site for [2Fe-2S] cluster. Positions 122 and 123 each coordinate Mg(2+). The residue at position 123 (Lys-123) is an N6-carboxylysine. Cys-194 provides a ligand contact to [2Fe-2S] cluster. Glu-447 contributes to the Mg(2+) binding site. Ser-473 (proton acceptor) is an active-site residue.

This sequence belongs to the IlvD/Edd family. Homodimer. [2Fe-2S] cluster is required as a cofactor. The cofactor is Mg(2+).

The catalysed reaction is (2R)-2,3-dihydroxy-3-methylbutanoate = 3-methyl-2-oxobutanoate + H2O. The enzyme catalyses (2R,3R)-2,3-dihydroxy-3-methylpentanoate = (S)-3-methyl-2-oxopentanoate + H2O. The protein operates within amino-acid biosynthesis; L-isoleucine biosynthesis; L-isoleucine from 2-oxobutanoate: step 3/4. It participates in amino-acid biosynthesis; L-valine biosynthesis; L-valine from pyruvate: step 3/4. Its function is as follows. Functions in the biosynthesis of branched-chain amino acids. Catalyzes the dehydration of (2R,3R)-2,3-dihydroxy-3-methylpentanoate (2,3-dihydroxy-3-methylvalerate) into 2-oxo-3-methylpentanoate (2-oxo-3-methylvalerate) and of (2R)-2,3-dihydroxy-3-methylbutanoate (2,3-dihydroxyisovalerate) into 2-oxo-3-methylbutanoate (2-oxoisovalerate), the penultimate precursor to L-isoleucine and L-valine, respectively. This Listeria innocua serovar 6a (strain ATCC BAA-680 / CLIP 11262) protein is Dihydroxy-acid dehydratase.